Consider the following 160-residue polypeptide: Glyoxalase domain-containing protein 5 (160 aa).

A VOC domain is found at 33–153 (RLDHLVLTVR…DQNLIEVSNY (121 aa)).

It belongs to the glyoxalase I family.

The sequence is that of Glyoxalase domain-containing protein 5 (glod5) from Xenopus tropicalis (Western clawed frog).